Reading from the N-terminus, the 435-residue chain is Serine--tRNA ligase (435 aa).

Residue 234–236 (TAE) coordinates L-serine. 265 to 267 (RRE) is an ATP binding site. An L-serine-binding site is contributed by E288. 352 to 355 (EISS) contributes to the ATP binding site. Residue S388 coordinates L-serine.

It belongs to the class-II aminoacyl-tRNA synthetase family. Type-1 seryl-tRNA synthetase subfamily. Homodimer. The tRNA molecule binds across the dimer.

The protein resides in the cytoplasm. It carries out the reaction tRNA(Ser) + L-serine + ATP = L-seryl-tRNA(Ser) + AMP + diphosphate + H(+). The catalysed reaction is tRNA(Sec) + L-serine + ATP = L-seryl-tRNA(Sec) + AMP + diphosphate + H(+). It functions in the pathway aminoacyl-tRNA biosynthesis; selenocysteinyl-tRNA(Sec) biosynthesis; L-seryl-tRNA(Sec) from L-serine and tRNA(Sec): step 1/1. In terms of biological role, catalyzes the attachment of serine to tRNA(Ser). Is also able to aminoacylate tRNA(Sec) with serine, to form the misacylated tRNA L-seryl-tRNA(Sec), which will be further converted into selenocysteinyl-tRNA(Sec). The polypeptide is Serine--tRNA ligase (Synechococcus sp. (strain JA-3-3Ab) (Cyanobacteria bacterium Yellowstone A-Prime)).